Consider the following 297-residue polypeptide: uncharacterized protein (297 aa).

3 disordered regions span residues 1 to 20 (MDTL…NADV), 39 to 100 (IEKD…ENLG), and 174 to 297 (VQKA…NEDQ). The region spanning 101-179 (NDLFVSGIAS…RVLNVQKAKR (79 aa)) is the RRM domain. Phosphoserine is present on Ser184. Composition is skewed to basic and acidic residues over residues 209-223 (GGYR…DSNR) and 233-253 (PQRE…DSRP). Residues 254–263 (RRERHFHGRS) show a composition bias toward basic residues. A compositionally biased stretch (polar residues) spans 287–297 (SHSSVPPNEDQ).

It localises to the nucleus. This is an uncharacterized protein from Schizosaccharomyces pombe (strain 972 / ATCC 24843) (Fission yeast).